The sequence spans 157 residues: 6,7-dimethyl-8-ribityllumazine synthase (157 aa).

5-amino-6-(D-ribitylamino)uracil contacts are provided by residues phenylalanine 24, serine 56–glutamate 58, and valine 79–isoleucine 81. Glutamate 84–threonine 85 is a binding site for (2S)-2-hydroxy-3-oxobutyl phosphate. Histidine 87 (proton donor) is an active-site residue. Phenylalanine 112 is a binding site for 5-amino-6-(D-ribitylamino)uracil. Arginine 126 contributes to the (2S)-2-hydroxy-3-oxobutyl phosphate binding site.

The protein belongs to the DMRL synthase family.

The enzyme catalyses (2S)-2-hydroxy-3-oxobutyl phosphate + 5-amino-6-(D-ribitylamino)uracil = 6,7-dimethyl-8-(1-D-ribityl)lumazine + phosphate + 2 H2O + H(+). It functions in the pathway cofactor biosynthesis; riboflavin biosynthesis; riboflavin from 2-hydroxy-3-oxobutyl phosphate and 5-amino-6-(D-ribitylamino)uracil: step 1/2. In terms of biological role, catalyzes the formation of 6,7-dimethyl-8-ribityllumazine by condensation of 5-amino-6-(D-ribitylamino)uracil with 3,4-dihydroxy-2-butanone 4-phosphate. This is the penultimate step in the biosynthesis of riboflavin. The sequence is that of 6,7-dimethyl-8-ribityllumazine synthase from Pyrococcus furiosus (strain ATCC 43587 / DSM 3638 / JCM 8422 / Vc1).